Consider the following 126-residue polypeptide: Fluoride-specific ion channel FluC (126 aa).

The next 4 membrane-spanning stretches (helical) occupy residues phenylalanine 6–leucine 26, tyrosine 36–phenylalanine 56, leucine 68–valine 88, and isoleucine 99–leucine 119. Residues glycine 76 and threonine 79 each coordinate Na(+).

This sequence belongs to the fluoride channel Fluc/FEX (TC 1.A.43) family.

The protein localises to the cell inner membrane. The catalysed reaction is fluoride(in) = fluoride(out). Its activity is regulated as follows. Na(+) is not transported, but it plays an essential structural role and its presence is essential for fluoride channel function. Fluoride-specific ion channel. Important for reducing fluoride concentration in the cell, thus reducing its toxicity. This is Fluoride-specific ion channel FluC from Ralstonia nicotianae (strain ATCC BAA-1114 / GMI1000) (Ralstonia solanacearum).